A 346-amino-acid polypeptide reads, in one-letter code: Putative isoaspartyl peptidase/L-asparaginase (346 aa).

Catalysis depends on threonine 207, which acts as the Nucleophile. Substrate is bound by residues 235 to 238 (RVGD) and 257 to 260 (TGTG).

The protein belongs to the Ntn-hydrolases family. As to quaternary structure, heterodimer of an alpha and beta chain produced by autocleavage. Cleaved into an alpha and beta chain by autocatalysis; this activates the enzyme. The N-terminal residue of the beta subunit is responsible for the nucleophile hydrolase activity.

It carries out the reaction Cleavage of a beta-linked Asp residue from the N-terminus of a polypeptide.. It catalyses the reaction L-asparagine + H2O = L-aspartate + NH4(+). Has both L-asparaginase and beta-aspartyl peptidase activity. Does not have aspartylglucosaminidase activity and is inactive toward GlcNAc-L-Asn. Likewise, has no activity toward glutamine. The chain is Putative isoaspartyl peptidase/L-asparaginase from Dictyostelium discoideum (Social amoeba).